The chain runs to 1099 residues: MASSWRLILFLSFTSCLSEYSEALSGLSTSYAALLRIKKSSTSSAFGSKSRPRYSSPSLGTLSVSPPSWRGAAQQYHSPVNLYHSPDAFRQDESVDYGPVFVQEPDDIIFPTDSDEKKVALNCEVRGNPSPTYRWLRNGTEIDLESDYRYSMIDGTFIINNPSESRDSGLYQCLATNTFGSILSREATLQFAYLGNFSGRTRSAVSVREGQGVVLMCSPPPHSPEIIYSWVFNEFPSFVAEDSRRFISQETGNLYISKVQTSDVGSYICLVKNAVTNARVLSPPTPLTLRNDGVMGEYEPKIEVHFPTTVTAAKGTTVKMECFALGNPVPTITWMKVNGYIPSKSRLRKSQAVLEIPNLQLDDAGIYECTAENSRGKNSFRGQLQIYTYPHWVQKLNDTQLDSGSPLQWECKATGKPRPTYRWLKNGAPLLPQSRVDTANGVLAIHSVNQSDAGMYQCLAENKYGAIYASAELKILASPPSFELNQVKKSIIVTKDREVLIECKPQGSPKPAISWRKGDKAVRGNKRIAILPDGSLRILNASKADEGKYICQGVNIFGSAEIIASVSVKEPTRIELTPKRTELTVGESIVLNCKAMHDSSLDVTFYWTLKGQPIDFEKEGGHFESIRAQASSADLMIRNILLMHAGRYGCRVQTTADSVSDEAELLVRGPPGPPGVVIVEEITESTATLSWSPATDNHSPISSYNLQARSPFSLGWQTVKTVPEVITGDMESAMAVDLNPWVEYEFRVVATNPIGTGDPSIPSRMIRTNEAVPKTAPSNVSGGSGRRHELVIAWEPVSEEFQNGEGFGYIVAFRPNGTRGWKEKMVTSSDASKFIYRDESVPPLTPFEVKVGVYNNKGDGPFSQIVVICSAEGEPTAAPTDVTATSVSVSEIFVVWKHVKESLGRPQGFEIGYWKDTEPEDSAETVRTRGNESFVMLTGLEGDTLYHLTVRAYNGAGYGPPSREVSATTKRHPPSEPPGNLRWEQQGSQVSLGWEPVRPLANESEVMGYKVFYRQEGHSKGQVIETQKPQAVVPLPEAGVYIIEVRAYSEGGDGTASSQIRVPSYAGGKITSAQSTLHSLSKWSSVTLLLALMLPSSSW.

An N-terminal signal peptide occupies residues 1–18 (MASSWRLILFLSFTSCLS). Ig-like C2-type domains lie at 99–190 (PVFV…ATLQ), 196–282 (NFSG…RVLS), 300–385 (PKIE…GQLQ), 390–474 (PHWV…AELK), 480–569 (PSFE…VSVK), and 571–660 (PTRI…DSVS). An intrachain disulfide couples Cys123 to Cys173. 2 N-linked (GlcNAc...) asparagine glycosylation sites follow: Asn138 and Asn196. 2 disulfides stabilise this stretch: Cys217/Cys269 and Cys322/Cys369. Residues Asn397, Asn449, and Asn540 are each glycosylated (N-linked (GlcNAc...) asparagine). Disulfide bonds link Cys411-Cys458, Cys503-Cys551, and Cys593-Cys650. Fibronectin type-III domains lie at 673 to 771 (PPGV…TNEA), 776 to 873 (APSN…SAEG), 878 to 972 (APTD…TKRH), and 977 to 1067 (PPGN…SYAG). N-linked (GlcNAc...) asparagine glycosylation is found at Asn779, Asn816, and Asn931. The disordered stretch occupies residues 958–983 (YGPPSREVSATTKRHPPSEPPGNLRW). Asn1002 carries N-linked (GlcNAc...) asparagine glycosylation. The GPI-anchor amidated serine moiety is linked to residue Ser1072. The propeptide at 1073-1099 (AQSTLHSLSKWSSVTLLLALMLPSSSW) is removed in mature form.

Belongs to the immunoglobulin superfamily. Contactin family. In terms of assembly, interacts with PTPRG. In terms of tissue distribution, specifically expressed in the nervous system. Expressed in cerebrum and cerebellum but at low level in spinal cord. In brain, it is expressed in highly restricted regions at postnatal day 7, such as the auditory pathway, including the cochlear nucleus, superior olive, inferior colliculus, medial geniculate nucleus and auditory cortex. Expressed in the accessory olfactory bulb, glomerular and mitral cell layers in the olfactory bulb, anterior thalamic nuclei, layers II-IV of the cerebral cortex, dentate gyrus of the hippocampus and external granule cells and Purkinje cells of the cerebellum. Also expressed in the piriform cortex, inferior olive and facial nucleus. Weakly or not expressed in other parts of the brain.

The protein localises to the cell membrane. Functionally, contactins mediate cell surface interactions during nervous system development. Has some neurite outgrowth-promoting activity in the cerebral cortical neurons but not in hippocampal neurons. Probably involved in neuronal activity in the auditory system. The protein is Contactin-5 (Cntn5) of Rattus norvegicus (Rat).